A 396-amino-acid polypeptide reads, in one-letter code: Phosphoglycerate kinase (396 aa).

Substrate is bound by residues 22-24 (DLN), R37, 60-63 (HFGR), R118, and R151. ATP contacts are provided by residues K201, E323, and 353–356 (GGDT).

The protein belongs to the phosphoglycerate kinase family. Monomer.

Its subcellular location is the cytoplasm. The catalysed reaction is (2R)-3-phosphoglycerate + ATP = (2R)-3-phospho-glyceroyl phosphate + ADP. Its pathway is carbohydrate degradation; glycolysis; pyruvate from D-glyceraldehyde 3-phosphate: step 2/5. The chain is Phosphoglycerate kinase from Xanthobacter autotrophicus (strain ATCC BAA-1158 / Py2).